The following is a 158-amino-acid chain: Endoribonuclease YbeY (158 aa).

3 residues coordinate Zn(2+): His117, His121, and His127.

It belongs to the endoribonuclease YbeY family. Requires Zn(2+) as cofactor.

Its subcellular location is the cytoplasm. Functionally, single strand-specific metallo-endoribonuclease involved in late-stage 70S ribosome quality control and in maturation of the 3' terminus of the 16S rRNA. In Francisella philomiragia subsp. philomiragia (strain ATCC 25017 / CCUG 19701 / FSC 153 / O#319-036), this protein is Endoribonuclease YbeY.